A 753-amino-acid polypeptide reads, in one-letter code: Transcription factor SOX-30 (753 aa).

Disordered stretches follow at residues 1-45 and 137-161; these read MERA…TLSA and AKKQ…TGPR. Residues 7–23 show a composition bias toward pro residues; it reads EPPPQPRPLRPAPPPLP. Residues 337–405 constitute a DNA-binding region (HMG box); that stretch reads VKRPMNAFMV…KHREEFPGWV (69 aa). 2 disordered regions span residues 514-575 and 726-753; these read TGPS…SPCP and PTST…LRDL. Composition is skewed to polar residues over residues 531 to 563 and 726 to 739; these read TVKQ…STIQ and PTST…VNVT.

As to quaternary structure, interacts with CTNNB1, competitively inhibiting CTNNB1-TCF7L2/TCF4 interaction.

The protein localises to the nucleus. It localises to the cytoplasm. Its function is as follows. Acts both as a transcriptional activator and a repressor. Binds to the DNA sequence 5'-ACAAT-3' and shows a preference for guanine residues surrounding this core motif. Binds to its own promoter and activates its own transcription. Required to activate the expression of postmeiotic genes involved in spermiogenesis. Binds to the promoter region of CTNNB1 and represses its transcription which leads to inhibition of Wnt signaling. Also inhibits Wnt signaling by binding to the CTNNB1 protein, preventing interaction of CTNNB1 with TCF7L2/TCF4. This is Transcription factor SOX-30 (SOX30) from Homo sapiens (Human).